Consider the following 397-residue polypeptide: Tryptophan synthase beta chain (397 aa).

N6-(pyridoxal phosphate)lysine is present on Lys86.

The protein belongs to the TrpB family. Tetramer of two alpha and two beta chains. Pyridoxal 5'-phosphate serves as cofactor.

It catalyses the reaction (1S,2R)-1-C-(indol-3-yl)glycerol 3-phosphate + L-serine = D-glyceraldehyde 3-phosphate + L-tryptophan + H2O. It functions in the pathway amino-acid biosynthesis; L-tryptophan biosynthesis; L-tryptophan from chorismate: step 5/5. Functionally, the beta subunit is responsible for the synthesis of L-tryptophan from indole and L-serine. This Aeromonas hydrophila subsp. hydrophila (strain ATCC 7966 / DSM 30187 / BCRC 13018 / CCUG 14551 / JCM 1027 / KCTC 2358 / NCIMB 9240 / NCTC 8049) protein is Tryptophan synthase beta chain.